The chain runs to 778 residues: Glutathione biosynthesis bifunctional protein GshAB (778 aa).

Positions 1 to 354 are glutamate--cysteine ligase; sequence MVNLDKGLLK…EEFFKNHDMV (354 aa). An ATP-grasp domain is found at 521–777; sequence KDILRENNIR…AGEKILDLLF (257 aa). 548–606 serves as a coordination point for ATP; the sequence is RLFKDEKIVIKPKSTNFGLGISIFPGEYSREDYDKAVEIAFREDSSILIEEFMTGKEYR. Residues aspartate 728, glutamate 747, and asparagine 749 each coordinate Mg(2+). Mn(2+) contacts are provided by aspartate 728, glutamate 747, and asparagine 749.

This sequence in the N-terminal section; belongs to the glutamate--cysteine ligase type 1 family. Type 2 subfamily. In terms of assembly, monomer. Requires Mg(2+) as cofactor. Mn(2+) serves as cofactor.

The enzyme catalyses L-cysteine + L-glutamate + ATP = gamma-L-glutamyl-L-cysteine + ADP + phosphate + H(+). It catalyses the reaction gamma-L-glutamyl-L-cysteine + glycine + ATP = glutathione + ADP + phosphate + H(+). It participates in sulfur metabolism; glutathione biosynthesis; glutathione from L-cysteine and L-glutamate: step 1/2. It functions in the pathway sulfur metabolism; glutathione biosynthesis; glutathione from L-cysteine and L-glutamate: step 2/2. Functionally, synthesizes glutathione from L-glutamate and L-cysteine via gamma-L-glutamyl-L-cysteine. The protein is Glutathione biosynthesis bifunctional protein GshAB of Clostridium perfringens (strain 13 / Type A).